Here is a 395-residue protein sequence, read N- to C-terminus: Chaperone protein DnaJ (395 aa).

The J domain occupies 4–69 (DYYEVLGVGR…DKRRRYDQFG (66 aa)). The CR-type zinc-finger motif lies at 152 to 233 (GVEKTLKIKK…CHGEGIKQGE (82 aa)). 8 residues coordinate Zn(2+): Cys165, Cys168, Cys181, Cys184, Cys207, Cys210, Cys221, and Cys224. 4 CXXCXGXG motif repeats span residues 165–172 (CDVCNGTG), 181–188 (CPTCQGTG), 207–214 (CPTCGGEG), and 221–228 (CTACHGEG).

The protein belongs to the DnaJ family. As to quaternary structure, homodimer. It depends on Zn(2+) as a cofactor.

The protein localises to the cytoplasm. Participates actively in the response to hyperosmotic and heat shock by preventing the aggregation of stress-denatured proteins and by disaggregating proteins, also in an autonomous, DnaK-independent fashion. Unfolded proteins bind initially to DnaJ; upon interaction with the DnaJ-bound protein, DnaK hydrolyzes its bound ATP, resulting in the formation of a stable complex. GrpE releases ADP from DnaK; ATP binding to DnaK triggers the release of the substrate protein, thus completing the reaction cycle. Several rounds of ATP-dependent interactions between DnaJ, DnaK and GrpE are required for fully efficient folding. Also involved, together with DnaK and GrpE, in the DNA replication of plasmids through activation of initiation proteins. In Prosthecochloris aestuarii (strain DSM 271 / SK 413), this protein is Chaperone protein DnaJ.